Reading from the N-terminus, the 458-residue chain is Argininosuccinate lyase (458 aa).

Belongs to the lyase 1 family. Argininosuccinate lyase subfamily.

It is found in the cytoplasm. The catalysed reaction is 2-(N(omega)-L-arginino)succinate = fumarate + L-arginine. It functions in the pathway amino-acid biosynthesis; L-arginine biosynthesis; L-arginine from L-ornithine and carbamoyl phosphate: step 3/3. The polypeptide is Argininosuccinate lyase (Neisseria meningitidis serogroup A / serotype 4A (strain DSM 15465 / Z2491)).